The primary structure comprises 479 residues: Poly(A) polymerase catalytic subunit (479 aa).

Active-site residues include D202 and D204. 3 residues coordinate Ca(2+): D202, D204, and D253.

This sequence belongs to the poxviridae poly(A) polymerase catalytic subunit family. Heterodimer of a large (catalytic) subunit and a small (regulatory) subunit.

It carries out the reaction RNA(n) + ATP = RNA(n)-3'-adenine ribonucleotide + diphosphate. Its function is as follows. Polymerase that creates the 3'-poly(A) tail of mRNA's. The sequence is that of Poly(A) polymerase catalytic subunit (OPG063) from Bos taurus (Bovine).